The following is a 68-amino-acid chain: Conotoxin Cal14.13b (68 aa).

Positions 1–20 (MKLCVVIVLLMLAMPFNGGE) are cleaved as a signal peptide. A propeptide spanning residues 21 to 68 (ASRFFNQHARSQRSGMKTRGIWCDPPCPEGETCRGGECSDEFNGDMGR) is cleaved from the precursor. Met66 is subject to Methionine amide.

Contains 2 disulfide bonds. Expressed by the venom duct.

The protein localises to the secreted. Its function is as follows. Probable neurotoxin with unknown target. Possibly targets ion channels. This chain is Conotoxin Cal14.13b, found in Californiconus californicus (California cone).